A 108-amino-acid polypeptide reads, in one-letter code: UPF0102 protein Sfri_0388 (108 aa).

It belongs to the UPF0102 family.

This is UPF0102 protein Sfri_0388 from Shewanella frigidimarina (strain NCIMB 400).